Reading from the N-terminus, the 147-residue chain is Large ribosomal subunit protein uL13 (147 aa).

Belongs to the universal ribosomal protein uL13 family. Part of the 50S ribosomal subunit.

Its function is as follows. This protein is one of the early assembly proteins of the 50S ribosomal subunit, although it is not seen to bind rRNA by itself. It is important during the early stages of 50S assembly. The polypeptide is Large ribosomal subunit protein uL13 (Lactobacillus delbrueckii subsp. bulgaricus (strain ATCC 11842 / DSM 20081 / BCRC 10696 / JCM 1002 / NBRC 13953 / NCIMB 11778 / NCTC 12712 / WDCM 00102 / Lb 14)).